Reading from the N-terminus, the 160-residue chain is Serine-protein kinase RsbW (160 aa).

This sequence belongs to the anti-sigma-factor family.

The enzyme catalyses L-seryl-[protein] + ATP = O-phospho-L-seryl-[protein] + ADP + H(+). The catalysed reaction is L-threonyl-[protein] + ATP = O-phospho-L-threonyl-[protein] + ADP + H(+). In terms of biological role, negative regulator of sigma-B activity. Phosphorylates and inactivates its specific antagonist protein, RsbV. Upon phosphorylation of RsbV, RsbW is released and binds to sigma-B, thereby blocking its ability to form an RNA polymerase holoenzyme (E-sigma-B). The sequence is that of Serine-protein kinase RsbW from Bacillus mycoides (strain KBAB4) (Bacillus weihenstephanensis).